We begin with the raw amino-acid sequence, 413 residues long: Multifunctional CCA protein (413 aa).

The ATP site is built by Gly-8 and Arg-11. CTP contacts are provided by Gly-8 and Arg-11. Mg(2+) is bound by residues Asp-21 and Asp-23. The ATP site is built by Arg-91, Arg-137, and Arg-140. CTP contacts are provided by Arg-91, Arg-137, and Arg-140. The 102-residue stretch at 228-329 (TGKHTLLSLK…VSLFDKGDFW (102 aa)) folds into the HD domain.

The protein belongs to the tRNA nucleotidyltransferase/poly(A) polymerase family. Bacterial CCA-adding enzyme type 1 subfamily. As to quaternary structure, monomer. Can also form homodimers and oligomers. Requires Mg(2+) as cofactor. Ni(2+) serves as cofactor.

The catalysed reaction is a tRNA precursor + 2 CTP + ATP = a tRNA with a 3' CCA end + 3 diphosphate. The enzyme catalyses a tRNA with a 3' CCA end + 2 CTP + ATP = a tRNA with a 3' CCACCA end + 3 diphosphate. Its function is as follows. Catalyzes the addition and repair of the essential 3'-terminal CCA sequence in tRNAs without using a nucleic acid template. Adds these three nucleotides in the order of C, C, and A to the tRNA nucleotide-73, using CTP and ATP as substrates and producing inorganic pyrophosphate. tRNA 3'-terminal CCA addition is required both for tRNA processing and repair. Also involved in tRNA surveillance by mediating tandem CCA addition to generate a CCACCA at the 3' terminus of unstable tRNAs. While stable tRNAs receive only 3'-terminal CCA, unstable tRNAs are marked with CCACCA and rapidly degraded. In Shewanella denitrificans (strain OS217 / ATCC BAA-1090 / DSM 15013), this protein is Multifunctional CCA protein.